Reading from the N-terminus, the 1024-residue chain is Translation initiation factor IF-2 (1024 aa).

The tract at residues 33 to 425 (SHMSSLEDDT…GRVKKTKTMK (393 aa)) is disordered. Basic and acidic residues-rich tracts occupy residues 43 to 62 (EARV…DTRV), 135 to 148 (TPED…ELKP), 167 to 198 (TPAK…KETS), and 223 to 263 (SKPD…KEVR). A compositionally biased stretch (polar residues) spans 316-325 (EATQAPTSPQ). Residues 332-350 (KPADKGPARAQAHRPDTGR) are compositionally biased toward basic and acidic residues. The segment covering 365-375 (RSKKKEWKKKG) has biased composition (basic residues). Positions 394-406 (SVVEGKDLYEKGR) are enriched in basic and acidic residues. The span at 407–423 (SGKKGRRKDGRVKKTKT) shows a compositional bias: basic residues. A tr-type G domain is found at 518 to 687 (SRPPVVTIMG…LLQSEVLELK (170 aa)). The G1 stretch occupies residues 527–534 (GHVDHGKT). GTP is bound at residue 527–534 (GHVDHGKT). The G2 stretch occupies residues 552–556 (GITQH). The tract at residues 573 to 576 (DTPG) is G3. GTP-binding positions include 573–577 (DTPGH) and 627–630 (NKMD). Residues 627–630 (NKMD) form a G4 region. Residues 663–665 (SAK) are G5.

Belongs to the TRAFAC class translation factor GTPase superfamily. Classic translation factor GTPase family. IF-2 subfamily.

The protein resides in the cytoplasm. Its function is as follows. One of the essential components for the initiation of protein synthesis. Protects formylmethionyl-tRNA from spontaneous hydrolysis and promotes its binding to the 30S ribosomal subunits. Also involved in the hydrolysis of GTP during the formation of the 70S ribosomal complex. The polypeptide is Translation initiation factor IF-2 (Desulforapulum autotrophicum (strain ATCC 43914 / DSM 3382 / VKM B-1955 / HRM2) (Desulfobacterium autotrophicum)).